The primary structure comprises 112 residues: uncharacterized protein (112 aa).

To Buchnera BU585.

This is an uncharacterized protein from Buchnera aphidicola subsp. Schizaphis graminum (strain Sg).